The chain runs to 262 residues: MASPSLLQSSASSFHGRFSPLAAPSSARMLSPPLRNVVKVSASGTVLVEKSEAEKTQRLKTAYLERIIPALKEEFKYVNIHQVPKVQKIVVNCGIGDAAQNDKGLEAAMKDIALITGQKPIKTRARASIATFKIREDQPLGIAVTLRGDVMYSFLDRLINLALPRTRDFQGVSPSSFDGNGNYSIGVKDQGVFPEIRFDAVGKTRGMDVCISTTAKSDQEGQKLLALMGMPFREGGGGSTGAIVRKKKLKSHHFDAKGKGKR.

Residues Met1–Lys39 constitute a chloroplast transit peptide.

Belongs to the universal ribosomal protein uL5 family. As to quaternary structure, part of the 50S ribosomal subunit; contacts the 5S rRNA.

It is found in the plastid. It localises to the chloroplast. In terms of biological role, binds 5S rRNA, forms part of the central protuberance of the 50S subunit. This is Large ribosomal subunit protein uL5c (RPL5) from Arabidopsis thaliana (Mouse-ear cress).